Here is a 400-residue protein sequence, read N- to C-terminus: Enoyl-[acyl-carrier-protein] reductase [NADH] (400 aa).

NAD(+) contacts are provided by residues 48 to 53 (GSSSGY), 74 to 75 (FE), 111 to 112 (DA), and 139 to 140 (LA). Tyrosine 225 serves as a coordination point for substrate. The active-site Proton donor is the tyrosine 235. Residues lysine 244 and 273 to 275 (VVT) contribute to the NAD(+) site.

The protein belongs to the TER reductase family. As to quaternary structure, monomer.

The enzyme catalyses a 2,3-saturated acyl-[ACP] + NAD(+) = a (2E)-enoyl-[ACP] + NADH + H(+). It participates in lipid metabolism; fatty acid biosynthesis. Its function is as follows. Involved in the final reduction of the elongation cycle of fatty acid synthesis (FAS II). Catalyzes the reduction of a carbon-carbon double bond in an enoyl moiety that is covalently linked to an acyl carrier protein (ACP). This is Enoyl-[acyl-carrier-protein] reductase [NADH] from Shewanella loihica (strain ATCC BAA-1088 / PV-4).